The following is a 377-amino-acid chain: Unsaturated glucuronyl hydrolase (377 aa).

Catalysis depends on aspartate 88, which acts as the Nucleophile. The Proton donor role is filled by aspartate 149.

This sequence belongs to the glycosyl hydrolase 88 family. In terms of assembly, monomer.

It localises to the cytoplasm. The catalysed reaction is beta-D-Delta(4)-GlcA-(1-&gt;4)-beta-D-Glc-(1-&gt;4)-alpha-L-Rha-(1-&gt;3)-D-Glc + H2O = beta-D-Glc-(1-&gt;4)-alpha-L-Rha-(1-&gt;3)-D-Glc + 5-dehydro-4-deoxy-D-glucuronate. Partially inhibited by divalent metal ions such as calcium, copper, iron and mercury. Functionally, catalyzes the hydrolysis of oligosaccharides with unsaturated glucuronyl residues at the non-reducing terminal, to a sugar or an amino sugar, and an unsaturated D-glucuronic acid (GlcA), which is nonenzymatically converted immediately to alpha-keto acid. The sequence is that of Unsaturated glucuronyl hydrolase (ugl) from Bacillus sp. (strain GL1).